The primary structure comprises 160 residues: SsrA-binding protein (160 aa).

Belongs to the SmpB family.

It localises to the cytoplasm. Functionally, required for rescue of stalled ribosomes mediated by trans-translation. Binds to transfer-messenger RNA (tmRNA), required for stable association of tmRNA with ribosomes. tmRNA and SmpB together mimic tRNA shape, replacing the anticodon stem-loop with SmpB. tmRNA is encoded by the ssrA gene; the 2 termini fold to resemble tRNA(Ala) and it encodes a 'tag peptide', a short internal open reading frame. During trans-translation Ala-aminoacylated tmRNA acts like a tRNA, entering the A-site of stalled ribosomes, displacing the stalled mRNA. The ribosome then switches to translate the ORF on the tmRNA; the nascent peptide is terminated with the 'tag peptide' encoded by the tmRNA and targeted for degradation. The ribosome is freed to recommence translation, which seems to be the essential function of trans-translation. The sequence is that of SsrA-binding protein from Pectobacterium atrosepticum (strain SCRI 1043 / ATCC BAA-672) (Erwinia carotovora subsp. atroseptica).